Here is a 465-residue protein sequence, read N- to C-terminus: Glutamate--tRNA ligase (465 aa).

A 'HIGH' region motif is present at residues 8–18 (PSPTGDLHIGG). Positions 235–239 (RLSKR) match the 'KMSKS' region motif. Lys-238 contributes to the ATP binding site.

This sequence belongs to the class-I aminoacyl-tRNA synthetase family. Glutamate--tRNA ligase type 1 subfamily. In terms of assembly, monomer.

The protein resides in the cytoplasm. It carries out the reaction tRNA(Glu) + L-glutamate + ATP = L-glutamyl-tRNA(Glu) + AMP + diphosphate. Catalyzes the attachment of glutamate to tRNA(Glu) in a two-step reaction: glutamate is first activated by ATP to form Glu-AMP and then transferred to the acceptor end of tRNA(Glu). The polypeptide is Glutamate--tRNA ligase (Dichelobacter nodosus (strain VCS1703A)).